The sequence spans 423 residues: Glutaminase (423 aa).

A glutaminase region spans residues 27 to 312 (GEVAQYIPQL…LSEDMGLHLM (286 aa)). Substrate is bound by residues Ser69, Asn119, Glu165, Asn172, Tyr196, Tyr248, and Val266. In terms of domain architecture, STAS spans 321–423 (AVRAIEERGD…SPQVDDPEEL (103 aa)).

The protein belongs to the glutaminase family. Homotetramer.

It carries out the reaction L-glutamine + H2O = L-glutamate + NH4(+). This Corynebacterium efficiens (strain DSM 44549 / YS-314 / AJ 12310 / JCM 11189 / NBRC 100395) protein is Glutaminase (glsA).